The primary structure comprises 68 residues: Galectin-10 (68 aa).

The Galectin domain maps to 1 to 68; sequence EPYLQVDFHT…LSISVLPDKY (68 aa).

As to quaternary structure, interacts with CEL.

The protein localises to the cytoplasm. It is found in the cytosol. Its subcellular location is the cytoplasmic granule. Regulates immune responses through the recognition of cell-surface glycans. Essential for the anergy and suppressive function of CD25-positive regulatory T-cells (Treg). The chain is Galectin-10 (CLC) from Pongo pygmaeus (Bornean orangutan).